The chain runs to 406 residues: Indole-3-pyruvate monooxygenase YUCCA1 (406 aa).

21–26 serves as a coordination point for FAD; it reads GAGPSG. 184-189 is an NADP(+) binding site; sequence GCGNSG.

This sequence belongs to the FMO family. Requires FAD as cofactor. Expressed in coleoptile tips, root tips, leaf blade tips, shoot apical meristem, vasculature of stems and flowers.

It catalyses the reaction indole-3-pyruvate + NADPH + O2 + H(+) = (indol-3-yl)acetate + CO2 + NADP(+) + H2O. Involved in auxin biosynthesis. Converts the indole-3-pyruvic acid (IPA) produced by the TAA family to indole-3-acetic acid (IAA). Functions downstream of TAR2 in auxin biosynthesis. Functions upstream of WOX11, a transcription factor that promotes the development of crown roots. The chain is Indole-3-pyruvate monooxygenase YUCCA1 from Oryza sativa subsp. japonica (Rice).